The chain runs to 307 residues: UDP-3-O-acyl-N-acetylglucosamine deacetylase (307 aa).

Positions 78, 241, and 245 each coordinate Zn(2+). Residue His268 is the Proton donor of the active site.

This sequence belongs to the LpxC family. Zn(2+) serves as cofactor.

The catalysed reaction is a UDP-3-O-[(3R)-3-hydroxyacyl]-N-acetyl-alpha-D-glucosamine + H2O = a UDP-3-O-[(3R)-3-hydroxyacyl]-alpha-D-glucosamine + acetate. The protein operates within glycolipid biosynthesis; lipid IV(A) biosynthesis; lipid IV(A) from (3R)-3-hydroxytetradecanoyl-[acyl-carrier-protein] and UDP-N-acetyl-alpha-D-glucosamine: step 2/6. Functionally, catalyzes the hydrolysis of UDP-3-O-myristoyl-N-acetylglucosamine to form UDP-3-O-myristoylglucosamine and acetate, the committed step in lipid A biosynthesis. The sequence is that of UDP-3-O-acyl-N-acetylglucosamine deacetylase from Bordetella avium (strain 197N).